The sequence spans 217 residues: Eukaryotic translation initiation factor 4E (217 aa).

The segment at 1-30 (MATVEPETTPTPNPPTTEEEKTESNQEVAN) is disordered. Ala-2 carries the N-acetylalanine modification. Thr-22 carries the phosphothreonine modification. The tract at residues 37–40 (HPLQ) is EIF4EBP1/2/3 binding. An mRNA-binding site is contributed by 56-57 (WQ). An EIF4EBP1/2/3 binding region spans residues 73–77 (WALYN). 102–103 (WE) lines the mRNA pocket. The EIF4EBP1/2/3 binding stretch occupies residues 132-139 (ETLLCLIG). Residues 157 to 162 (RAKGDK) and 205 to 207 (TKS) contribute to the mRNA site. Residue Ser-209 is modified to Phosphoserine; by PKC and MKNK2.

This sequence belongs to the eukaryotic initiation factor 4E family. In terms of assembly, eIF4F is a multi-subunit complex, the composition of which varies with external and internal environmental conditions. It is composed of at least EIF4A, EIF4E and EIF4G1/EIF4G3. EIF4E is also known to interact with other partners. Interacts with EIF4ENIF1/4E-T; promotes recruitment to P-bodies and import into the nucleus. Hypophosphorylated EIF4EBP1, EIF4EBP2 and EIF4EBP3 compete with EIF4G1/EIF4G3 to interact with EIF4E; insulin stimulated MAP-kinase (MAPK1 and MAPK3) phosphorylation of EIF4EBP1 causes dissociation of the complex allowing EIF4G1/EIF4G3 to bind and consequent initiation of translation. Interacts mutually exclusive with EIF4A1 or EIF4A2. Interacts with NGDN and PIWIL2. Component of the CYFIP1-EIF4E-FMR1 complex composed of CYFIP, EIF4E and FMR1. Interacts directly with CYFIP1. Interacts with CLOCK. Binds to MKNK2 in nucleus. Interacts with LIMD1, WTIP and AJUBA. Interacts with APOBEC3G in an RNA-dependent manner. Interacts with LARP1. Interacts with METTL3. Interacts with RBM24; this interaction prevents EIF4E from binding to p53/TP53 mRNA and inhibits the assembly of translation initiation complex. Interacts with DDX3X; interaction is direct and in an RNA-independent manner; this interaction enhances EIF4E cap-binding ability and is required for the repression of cap-dependent translation and the increase of IRES-mediated translation. DDX3X competes with EIF4G1 for interaction with EIF4E. Interacts with EIF4G1; which in a mutual exclusive interaction associates either with EIF1 or with EIF4E on a common binding site. Interacts with BTG4 and CNOT7. Interacts with LRPPRC (via N-terminus); the interaction promotes association of EIF4E with 4ESE-containing mRNAs. Interacts with mRNA cleavage enzyme CPSF3 and its cofactor CPSF1. Interacts (via RING-type zinc finger) with PML; the interaction results in conformational changes of both interacting proteins and reduces EIF4E affinity for the 5' m7G cap of mRNA, thus reducing EIF4E-mediated mRNA nuclear export. Interacts with homeobox protein HHEX/PRH; the interaction inhibits EIF4E-mediated mRNA nuclear export. Interacts with homeobox protein HOXA9; the interaction positively regulates EIF4E-mediated mRNA nuclear export. Interacts with homeobox protein EMX2. (Microbial infection) Interacts with Lassa virus Z protein. As to quaternary structure, (Microbial infection) Interacts with Lymphocytic choriomeningitis virus (LCMV) Z protein (via RING-type zinc finger); the interaction results in conformational changes of both interacting proteins and reduces EIF4E affinity for the m7G mRNA cap structure. In terms of assembly, (Microbial infection) Interacts (via cap-binding region) with potato virus Y VPg; this interaction mediates the translation of the VPg-viral RNA conjugates and interferes with the cellular EIF4E-dependent mRNA export and translation. In terms of processing, phosphorylation increases the ability of the protein to bind to mRNA caps and to form the eIF4F complex. Phosphorylation also enhances its mRNA transport function. Phosphorylation at Ser-209 is not essential for protein synthesis.

Its subcellular location is the cytoplasm. The protein resides in the P-body. It is found in the stress granule. The protein localises to the nucleus. It localises to the nucleus speckle. Its subcellular location is the nuclear body. Acts in the cytoplasm to initiate and regulate protein synthesis and is required in the nucleus for export of a subset of mRNAs from the nucleus to the cytoplasm which promotes processes such as RNA capping, processing and splicing. Component of the protein complex eIF4F, which is involved in the recognition of the mRNA cap, ATP-dependent unwinding of 5'-terminal secondary structure and recruitment of mRNA to the ribosome. This protein recognizes and binds the 7-methylguanosine (m7G)-containing mRNA cap during an early step in the initiation of protein synthesis and facilitates ribosome binding by inducing the unwinding of the mRNAs secondary structures. Together with EIF4G1, antagonizes the scanning promoted by EIF1-EIF4G1 and is required for TISU translation, a process where the TISU element recognition makes scanning unnecessary. In addition to its role in translation initiation, also acts as a regulator of translation and stability in the cytoplasm. Component of the CYFIP1-EIF4E-FMR1 complex which binds to the mRNA cap and mediates translational repression: in the complex, EIF4E mediates the binding to the mRNA cap. Component of a multiprotein complex that sequesters and represses translation of proneurogenic factors during neurogenesis. In P-bodies, component of a complex that mediates the storage of translationally inactive mRNAs in the cytoplasm and prevents their degradation. May play an important role in spermatogenesis through translational regulation of stage-specific mRNAs during germ cell development. As well as its roles in translation, also involved in mRNA nucleocytoplasmic transport. Its role in mRNA export from the nucleus to the cytoplasm relies on its ability to bind the m7G cap of RNAs and on the presence of the 50-nucleotide EIF4E sensitivity element (4ESE) in the 3'UTR of sensitive transcripts. Interaction with the 4ESE is mediated by LRPPRC which binds simultaneously to both EIF4E and the 4ESE, thereby acting as a platform for assembly for the RNA export complex. EIF4E-dependent mRNA export is independent of ongoing protein or RNA synthesis and is also NFX1-independent but is XPO1-dependent with LRPPRC interacting with XPO1 to form an EIF4E-dependent mRNA export complex. Alters the composition of the cytoplasmic face of the nuclear pore to promote RNA export by reducing RANBP2 expression, relocalizing nucleoporin NUP214 and increasing expression of RANBP1 and RNA export factors DDX19 and GLE1. Promotes the nuclear export of cyclin CCND1 mRNA. Promotes the nuclear export of NOS2/iNOS mRNA. Promotes the nuclear export of MDM2 mRNA. Promotes the export of additional mRNAs, including others involved in the cell cycle. In the nucleus, binds to capped splice factor-encoding mRNAs and stimulates their nuclear export to enhance splice factor production by increasing their cytoplasmic availability to the translation machinery. May also regulate splicing through interaction with the spliceosome in an RNA and m7G cap-dependent manner. Also binds to some pre-mRNAs and may play a role in their recruitment to the spliceosome. Promotes steady-state capping of a subset of coding and non-coding RNAs by mediating nuclear export of capping machinery mRNAs including RNMT, RNGTT and RAMAC to enhance their translation. Stimulates mRNA 3'-end processing by promoting the expression of several core cleavage complex factors required for mRNA cleavage and polyadenylation, and may also have a direct effect through its interaction with the CPSF3 cleavage enzyme. Rescues cells from apoptosis by promoting activation of serine/threonine-protein kinase AKT1 through mRNA export of NBS1 which potentiates AKT1 phosphorylation and also through mRNA export of AKT1 effectors, allowing for increased production of these proteins. This is Eukaryotic translation initiation factor 4E from Homo sapiens (Human).